Here is a 22-residue protein sequence, read N- to C-terminus: Mu-conotoxin GIIIC (22 aa).

Intrachain disulfides connect C3–C15, C4–C20, and C10–C21. 3 positions are modified to 4-hydroxyproline: P6, P7, and P17. A22 carries the alanine amide modification.

It belongs to the conotoxin M superfamily. Expressed by the venom duct.

Its subcellular location is the secreted. Functionally, mu-conotoxins block voltage-gated sodium channels (Nav). This toxin shows potent activity on Nav1.4/SCN4A (IC(50)=286 nM), and weak activity on mNav1.6/SCN8A. The protein is Mu-conotoxin GIIIC of Conus geographus (Geography cone).